The sequence spans 468 residues: 6-phospho-beta-galactosidase (468 aa).

Residues Gln19, His116, Asn159, Glu160, and Asn297 each coordinate D-galactose 6-phosphate. The Proton donor role is filled by Glu160. The Nucleophile role is filled by Glu375. 4 residues coordinate D-galactose 6-phosphate: Ser428, Trp429, Lys435, and Tyr437.

It belongs to the glycosyl hydrolase 1 family.

The enzyme catalyses a 6-phospho-beta-D-galactoside + H2O = D-galactose 6-phosphate + an alcohol. Its pathway is carbohydrate metabolism; lactose degradation; D-galactose 6-phosphate and beta-D-glucose from lactose 6-phosphate: step 1/1. This chain is 6-phospho-beta-galactosidase, found in Streptococcus sanguinis (strain SK36).